The primary structure comprises 93 residues: DNA/RNA-binding protein Alba 2 (93 aa).

Belongs to the histone-like Alba family.

It localises to the cytoplasm. It is found in the chromosome. Its function is as follows. Binds double-stranded DNA tightly but without sequence specificity. Involved in DNA compaction. The protein is DNA/RNA-binding protein Alba 2 of Methanopyrus kandleri (strain AV19 / DSM 6324 / JCM 9639 / NBRC 100938).